We begin with the raw amino-acid sequence, 194 residues long: ATP-dependent Clp protease proteolytic subunit (194 aa).

The active-site Nucleophile is the Ser97. His122 is a catalytic residue.

It belongs to the peptidase S14 family. In terms of assembly, fourteen ClpP subunits assemble into 2 heptameric rings which stack back to back to give a disk-like structure with a central cavity, resembling the structure of eukaryotic proteasomes.

Its subcellular location is the cytoplasm. It carries out the reaction Hydrolysis of proteins to small peptides in the presence of ATP and magnesium. alpha-casein is the usual test substrate. In the absence of ATP, only oligopeptides shorter than five residues are hydrolyzed (such as succinyl-Leu-Tyr-|-NHMec, and Leu-Tyr-Leu-|-Tyr-Trp, in which cleavage of the -Tyr-|-Leu- and -Tyr-|-Trp bonds also occurs).. Cleaves peptides in various proteins in a process that requires ATP hydrolysis. Has a chymotrypsin-like activity. Plays a major role in the degradation of misfolded proteins. This Campylobacter jejuni subsp. jejuni serotype O:6 (strain 81116 / NCTC 11828) protein is ATP-dependent Clp protease proteolytic subunit.